Reading from the N-terminus, the 200-residue chain is Snake venom serine protease VaSP1 (200 aa).

Positions 1-200 (VIGGDECNIN…EIQGIVSYGK (200 aa)) constitute a Peptidase S1 domain. Catalysis depends on charge relay system residues aspartate 88 and serine 182.

Monomer. Post-translationally, N-glycosylated. The protein exist in multiple isoforms. In terms of tissue distribution, expressed by the venom gland.

The protein localises to the secreted. Its activity is regulated as follows. Inhibited by Pefabloc (90% inhibition), DTT (90%), Zn(2+) (80%), trypsin inhibitor II (50%), and benzamidine (45%), but not inhibited by EDTA, Ca(2+), Mg(2+) and L-Cys. Functionally, snake venom serine protease active on several blood coagulation enzymes. It completely cleaves fibrinogen Aalpha chain (FGA) after 120 minutes, partially cleaves Bbeta chain (FGB) (overnight) and has no activity on gamma chain. It does not release fibrinopeptides A and/or B exclusively, since the enzyme does not provoke fibrin polymerisation. It also degrades fibrin as efficiently as plasmin, and exhibits potent ability to cleave plasminogen and prothrombin, as well as heavy chain of factor X (F10). In vitro, it cleaves insulin B-chain (at positions His38-Leu39, Ala40-Leu41 and Tyr16-Leu17). The chain is Snake venom serine protease VaSP1 from Vipera ammodytes ammodytes (Western sand viper).